The following is a 144-amino-acid chain: MTKPQKDELKKKLTPIQYFVTQENGTEPPFQNEYYETEEEGIYVDVVSGKPLFSSKDKYDAGCGWPSFTKPIDEAEIIEKEDRSHFMVRTEVRSKNADSHLGHVFPDGPGPNGLRYCINSAALRFIPKAKLKEAGYGAYEKLFD.

Residues 6-128 (KDELKKKLTP…NSAALRFIPK (123 aa)) enclose the MsrB domain. Catalysis depends on Cys117, which acts as the Nucleophile.

The protein belongs to the MsrB Met sulfoxide reductase family.

The enzyme catalyses L-methionyl-[protein] + [thioredoxin]-disulfide + H2O = L-methionyl-(R)-S-oxide-[protein] + [thioredoxin]-dithiol. The chain is Peptide methionine sulfoxide reductase MsrB from Shouchella clausii (strain KSM-K16) (Alkalihalobacillus clausii).